Here is a 309-residue protein sequence, read N- to C-terminus: Manganese ABC transporter substrate-binding lipoprotein PsaA (309 aa).

The N-terminal stretch at 1-19 is a signal peptide; that stretch reads MKKLGTLFVLFLSVIVLVA. C20 is lipidated: N-palmitoyl cysteine. The S-diacylglycerol cysteine moiety is linked to residue C20. Mn(2+) contacts are provided by H67, H139, E205, and D280.

This sequence belongs to the bacterial solute-binding protein 9 family. Lipoprotein receptor antigen (Lrai) subfamily.

The protein resides in the cell membrane. Functionally, part of the ATP-riven (ABC) transport system PsaABC involved in manganese import. Binds manganese with high affinity and specificity and delivers it to the membrane permease for translocation into the cytoplasm. Also acts as an adhesin which is involved on adherence to extracellular matrix. This chain is Manganese ABC transporter substrate-binding lipoprotein PsaA (psaA), found in Streptococcus mitis.